Here is a 267-residue protein sequence, read N- to C-terminus: Glucosamine-6-phosphate deaminase (267 aa).

The Proton acceptor; for enolization step role is filled by aspartate 72. Catalysis depends on aspartate 141, which acts as the For ring-opening step. Residue histidine 143 is the Proton acceptor; for ring-opening step of the active site. Glutamate 148 (for ring-opening step) is an active-site residue.

The protein belongs to the glucosamine/galactosamine-6-phosphate isomerase family. NagB subfamily. As to quaternary structure, homohexamer.

It catalyses the reaction alpha-D-glucosamine 6-phosphate + H2O = beta-D-fructose 6-phosphate + NH4(+). The protein operates within amino-sugar metabolism; N-acetylneuraminate degradation; D-fructose 6-phosphate from N-acetylneuraminate: step 5/5. Allosterically activated by N-acetylglucosamine 6-phosphate (GlcNAc6P). In terms of biological role, catalyzes the reversible isomerization-deamination of glucosamine 6-phosphate (GlcN6P) to form fructose 6-phosphate (Fru6P) and ammonium ion. The chain is Glucosamine-6-phosphate deaminase from Actinobacillus pleuropneumoniae serotype 3 (strain JL03).